Consider the following 268-residue polypeptide: 4-pyridoxolactonase (268 aa).

Residues His-96, His-98, Asp-100, His-101, His-185, Asp-207, and His-252 each contribute to the Zn(2+) site. Asp-100 functions as the Proton donor/acceptor in the catalytic mechanism.

It belongs to the metallo-beta-lactamase superfamily. As to quaternary structure, homodimer. Requires Zn(2+) as cofactor.

It catalyses the reaction 4-pyridoxolactone + H2O = 4-pyridoxate + H(+). Its pathway is cofactor degradation; B6 vitamer degradation; 4-pyridoxate from pyridoxal: step 2/2. With respect to regulation, inhibited by Hg(2+). Its function is as follows. Involved in the degradation of pyridoxine or pyridoxamine (free, phosphate-unbound, forms of vitamin B6). Hydrolyzes 4-pyridoxolactone to 4-pyridoxic acid. Has lower activity toward N-hexanoyl-D,L-homoserine lactone, but is not active toward 5-pyridoxolactone and gamma-butyrolactone. The protein is 4-pyridoxolactonase of Mesorhizobium japonicum (strain LMG 29417 / CECT 9101 / MAFF 303099) (Mesorhizobium loti (strain MAFF 303099)).